We begin with the raw amino-acid sequence, 142 residues long: MGRLVFVSFGGWDVFLSLSGTGADCPSDWSSYEGHCYRVFQQEMTWEAAEKFCTQQHQKSHPVYFRSSEEVDFLVSILKFDLFWMGWRDIWNERRLQWSDGTKVNYKAWSAEPECVVCRATDNQWLSTSCSKTHNVVCKFQA.

A signal peptide spans 1–23 (MGRLVFVSFGGWDVFLSLSGTGA). 3 disulfide bridges follow: Cys25/Cys36, Cys53/Cys138, and Cys115/Cys130. A C-type lectin domain is found at 32–139 (YEGHCYRVFQ…CSKTHNVVCK (108 aa)).

The protein belongs to the snaclec family. Heteromultimer; disulfide-linked. In terms of tissue distribution, expressed by the venom gland.

It is found in the secreted. In terms of biological role, interferes with one step of hemostasis (modulation of platelet aggregation, or coagulation cascade, for example). The sequence is that of C-type lectin 13 from Crotalus adamanteus (Eastern diamondback rattlesnake).